The following is a 69-amino-acid chain: uncharacterized protein (69 aa).

This is an uncharacterized protein from Mycobacterium tuberculosis (strain ATCC 25618 / H37Rv).